The sequence spans 137 residues: Small ribosomal subunit protein uS12 (137 aa).

Disordered regions lie at residues Met-1–Ser-21 and Lys-33–Lys-57. Residue Asp-102 is modified to 3-methylthioaspartic acid.

This sequence belongs to the universal ribosomal protein uS12 family. As to quaternary structure, part of the 30S ribosomal subunit. Contacts proteins S8 and S17. May interact with IF1 in the 30S initiation complex.

Its function is as follows. With S4 and S5 plays an important role in translational accuracy. In terms of biological role, interacts with and stabilizes bases of the 16S rRNA that are involved in tRNA selection in the A site and with the mRNA backbone. Located at the interface of the 30S and 50S subunits, it traverses the body of the 30S subunit contacting proteins on the other side and probably holding the rRNA structure together. The combined cluster of proteins S8, S12 and S17 appears to hold together the shoulder and platform of the 30S subunit. This Streptococcus pneumoniae (strain ATCC 700669 / Spain 23F-1) protein is Small ribosomal subunit protein uS12.